Here is a 600-residue protein sequence, read N- to C-terminus: Terpenoid synthase 8 (600 aa).

Mg(2+) contacts are provided by D352, D356, N497, and D505. Residues 352–356 carry the DDXXD motif motif; it reads DDTCD.

Belongs to the terpene synthase family. Tpsa subfamily. Mg(2+) is required as a cofactor. Requires Mn(2+) as cofactor. As to expression, stele, and tips of primary and secondary root.

The protein localises to the plastid. The catalysed reaction is (2E,6E,10E)-geranylgeranyl diphosphate = rhizathalene A + diphosphate. It participates in secondary metabolite biosynthesis; terpenoid biosynthesis. Functionally, catalyzes the synthesis of the semivolatile diterpene rhizatalene A. This chain is Terpenoid synthase 8 (TPS08), found in Arabidopsis thaliana (Mouse-ear cress).